Reading from the N-terminus, the 563-residue chain is Putative ABC transporter ATP-binding protein SCO2324 (563 aa).

The ABC transporter 1 domain occupies Ile-2–Leu-243. Gly-36–Ser-43 contacts ATP. Positions Ala-271–Ala-317 are disordered. Residues His-278–Arg-293 are compositionally biased toward pro residues. Residues Ala-317 to Lys-545 form the ABC transporter 2 domain. Gly-349–Ser-356 contributes to the ATP binding site.

It belongs to the ABC transporter superfamily.

The protein resides in the cell membrane. Functionally, probably part of an ABC transporter complex. Responsible for energy coupling to the transport system. This chain is Putative ABC transporter ATP-binding protein SCO2324, found in Streptomyces coelicolor (strain ATCC BAA-471 / A3(2) / M145).